Here is a 441-residue protein sequence, read N- to C-terminus: Probable magnesium transporter NIPA8 (441 aa).

The Extracellular portion of the chain corresponds to 1 to 4 (MGEW). A helical transmembrane segment spans residues 5–25 (VIGAFINIFGSVAINFGTNLL). Residues 26 to 56 (KLGHNERERLALQDGGGKMPLKPIIHNQTWR) are Cytoplasmic-facing. The helical transmembrane segment at 57–77 (VGILVFLLGNCLNFISFGYAA) threads the bilayer. At 78-79 (QS) the chain is on the extracellular side. A helical transmembrane segment spans residues 80 to 100 (LLAALGSIQFVSNIAFAYVVL). The Cytoplasmic segment spans residues 101 to 105 (NKMVT). Residues 106 to 126 (VKVLVATAFIVLGNVFLVAFG) form a helical membrane-spanning segment. Residues 127–144 (NHQSPVFTPEQLAEKYSN) are Extracellular-facing. Residues 145–165 (VTFLVYCGILILIVAVHHFLY) traverse the membrane as a helical segment. The Cytoplasmic portion of the chain corresponds to 166–184 (RKGEVLISTPGQEISSYWK). Residues 185–205 (MLLPFSYAVVSGAIGSCSVLF) traverse the membrane as a helical segment. Residues 206–222 (AKSLSNLLRLAMSSSYQ) lie on the Extracellular side of the membrane. Residues 223–243 (LHSWFTYSMLLLFLSTAGFWM) form a helical membrane-spanning segment. Residues 244-255 (TRLNEGLSLYDA) are Cytoplasmic-facing. A helical membrane pass occupies residues 256-276 (ILIVPMFQIAWTFFSICTGCI). Residues 277–288 (YFQEFQVFDALR) are Extracellular-facing. The helical transmembrane segment at 289 to 309 (TTMFILGMMCVFIGISLLAPD) threads the bilayer. Topologically, residues 310-441 (DTRGNETKDN…MLEKTISSKA (132 aa)) are cytoplasmic. Residues 313 to 347 (GNETKDNSSSLDSIVSSSVPTEEDRLIPQSSEDGH) are disordered. Residues 320–330 (SSSLDSIVSSS) show a composition bias toward low complexity. Positions 334–347 (EEDRLIPQSSEDGH) are enriched in basic and acidic residues.

It belongs to the NIPA (TC 2.A.7) family. Homodimer.

The protein resides in the cell membrane. Its subcellular location is the early endosome. Its function is as follows. Acts as a Mg(2+) transporter. Can also transport other divalent cations such as Fe(2+), Sr(2+), Ba(2+), Mn(2+) and Co(2+) but to a much less extent than Mg(2+). The chain is Probable magnesium transporter NIPA8 from Arabidopsis thaliana (Mouse-ear cress).